Reading from the N-terminus, the 233-residue chain is Ribonuclease HII (233 aa).

The RNase H type-2 domain maps to 21–211 (KIIAGVDEVG…LDALPQWRHL (191 aa)). The a divalent metal cation site is built by aspartate 27, glutamate 28, and aspartate 119.

It belongs to the RNase HII family. The cofactor is Mn(2+). Requires Mg(2+) as cofactor.

It localises to the cytoplasm. The enzyme catalyses Endonucleolytic cleavage to 5'-phosphomonoester.. Endonuclease that specifically degrades the RNA of RNA-DNA hybrids. The protein is Ribonuclease HII (rnhB) of Streptomyces coelicolor (strain ATCC BAA-471 / A3(2) / M145).